Reading from the N-terminus, the 264-residue chain is Apolipoprotein A-I (264 aa).

A signal peptide spans 1–18 (MRVVVVTLALLFLTGTQA). 2 consecutive repeat copies span residues 67–88 (LKLA…EDMA) and 89–110 (PYYK…AELT). The 10 X approximate tandem repeats stretch occupies residues 67–264 (LKLADNLDTL…LLDELQKTVA (198 aa)). Residues 111–121 (KDLEEVKEKIR) form a 3; half-length repeat. 5 tandem repeats follow at residues 122–143 (PFLD…QRLA), 144–165 (PVAE…QKLT), 166–187 (PVAE…KNLA), 188–209 (PYSD…EKGI), and 210–231 (PQAA…EKMT). One copy of the 9; half-length repeat lies at 232–242 (PLVQDFKERLT). The stretch at 243–264 (PYAENLKTRFISLLDELQKTVA) is repeat 10.

It belongs to the apolipoprotein A1/A4/E family. Major protein of plasma HDL, also found in chylomicrons.

Its subcellular location is the secreted. Functionally, participates in the reverse transport of cholesterol from tissues to the liver for excretion by promoting cholesterol efflux from tissues and by acting as a cofactor for the lecithin cholesterol acyltransferase (LCAT). This chain is Apolipoprotein A-I (APOA1), found in Anas platyrhynchos (Mallard).